The primary structure comprises 512 residues: Serine--tRNA ligase, cytoplasmic (512 aa).

Position 1 is an N-acetylmethionine (Met-1). Positions 9–61 are interaction with tRNA; sequence RVDKGGDPALIRETQEKRFKDPGLVDQLVKADSEWRRCRFRADNLNKLKNLCS. Phosphoserine is present on Ser-241. Residues Thr-271 and Arg-302 each coordinate L-serine. Residues 302–304 and 318–321 each bind ATP; these read RQE and VHQF. An N6-acetyllysine modification is found at Lys-323. Position 325 (Glu-325) interacts with L-serine. Residue 391–394 coordinates ATP; sequence ELVS. Asn-427 contacts L-serine. The tract at residues 470–512 is disordered; sequence FVKPAPIDQEPSKKQKKQHEGSKKKAKEVPLENQLQSMEVTEA. The segment covering 479–499 has biased composition (basic and acidic residues); the sequence is EPSKKQKKQHEGSKKKAKEVP. A Nuclear localization signal motif is present at residues 482–494; it reads KKQKKQHEGSKKK. The segment covering 502–512 has biased composition (polar residues); the sequence is NQLQSMEVTEA. Ser-506 is modified (phosphoserine).

This sequence belongs to the class-II aminoacyl-tRNA synthetase family. Type-1 seryl-tRNA synthetase subfamily. As to quaternary structure, homodimer. The tRNA molecule may bind across the dimer. Interacts with SIRT2. Interacts with METTL6; interaction is required for the tRNA N(3)-methylcytidine methyltransferase activity of METTL6.

The protein localises to the cytoplasm. It localises to the nucleus. The enzyme catalyses tRNA(Ser) + L-serine + ATP = L-seryl-tRNA(Ser) + AMP + diphosphate + H(+). It carries out the reaction tRNA(Sec) + L-serine + ATP = L-seryl-tRNA(Sec) + AMP + diphosphate + H(+). It participates in aminoacyl-tRNA biosynthesis; selenocysteinyl-tRNA(Sec) biosynthesis; L-seryl-tRNA(Sec) from L-serine and tRNA(Sec): step 1/1. Catalyzes the attachment of serine to tRNA(Ser) in a two-step reaction: serine is first activated by ATP to form Ser-AMP and then transferred to the acceptor end of tRNA(Ser). Is probably also able to aminoacylate tRNA(Sec) with serine, to form the misacylated tRNA L-seryl-tRNA(Sec), which will be further converted into selenocysteinyl-tRNA(Sec). In the nucleus, binds to the VEGFA core promoter and prevents MYC binding and transcriptional activation by MYC. Recruits SIRT2 to the VEGFA promoter, promoting deacetylation of histone H4 at 'Lys-16' (H4K16). Thereby, inhibits the production of VEGFA and sprouting angiogenesis mediated by VEGFA. The polypeptide is Serine--tRNA ligase, cytoplasmic (Sars1) (Mus musculus (Mouse)).